A 237-amino-acid chain; its full sequence is Purine nucleoside phosphorylase DeoD-type (237 aa).

His-4 is an a purine D-ribonucleoside binding site. Phosphate contacts are provided by residues Gly-20, Arg-24, Arg-43, and 87-90; that span reads RVGS. Residues 179–181 and 203–204 each bind a purine D-ribonucleoside; these read EME and SD. Residue Asp-204 is the Proton donor of the active site.

Belongs to the PNP/UDP phosphorylase family. In terms of assembly, homohexamer; trimer of homodimers.

It carries out the reaction a purine D-ribonucleoside + phosphate = a purine nucleobase + alpha-D-ribose 1-phosphate. The enzyme catalyses a purine 2'-deoxy-D-ribonucleoside + phosphate = a purine nucleobase + 2-deoxy-alpha-D-ribose 1-phosphate. Its function is as follows. Catalyzes the reversible phosphorolytic breakdown of the N-glycosidic bond in the beta-(deoxy)ribonucleoside molecules, with the formation of the corresponding free purine bases and pentose-1-phosphate. This chain is Purine nucleoside phosphorylase DeoD-type, found in Dichelobacter nodosus (strain VCS1703A).